We begin with the raw amino-acid sequence, 291 residues long: Lys-63-specific deubiquitinase BRCC36-like (291 aa).

The MPN domain occupies 12–179 (VYLESDAFLV…YTCFQSVQAS (168 aa)). Zn(2+) contacts are provided by His122, His124, and Asp135. The short motif at 122–135 (HSHPHITVWPSHVD) is the JAMM motif element. Residues 259 to 286 (LQWLEDRLEQNQQRLQELEQEKEDLMEE) are a coiled coil.

This sequence belongs to the peptidase M67A family. BRCC36 subfamily.

Metalloprotease that specifically cleaves 'Lys-63'-linked polyubiquitin chains. This is Lys-63-specific deubiquitinase BRCC36-like from Mus musculus (Mouse).